Consider the following 546-residue polypeptide: (-)-5-epieremophilene synthase STPS3 (546 aa).

Positions 299, 303, 442, 446, and 450 each coordinate Mg(2+). Positions 299–303 match the DDXXD motif motif; it reads DDTYD.

Belongs to the terpene synthase family. Tpsa subfamily. As to quaternary structure, monomer. The cofactor is Mg(2+). Highly expressed in flowers and at lower levels in leaves.

The catalysed reaction is (2E,6E)-farnesyl diphosphate = (-)-5-epi-eremophilene + diphosphate. It participates in secondary metabolite biosynthesis; terpenoid biosynthesis. In terms of biological role, sesquiterpene synthase that catalyzes the conversion of farnesyl diphosphate to (-)-5-epi-eremophilene. The sequence is that of (-)-5-epieremophilene synthase STPS3 from Salvia miltiorrhiza (Chinese sage).